The sequence spans 218 residues: Adenylate kinase (218 aa).

Residue Gly10 to Thr15 coordinates ATP. The segment at Ser30–Val59 is NMP. Residues Thr31, Arg36, Gly57–Val59, Gly85–Arg88, and Gln92 contribute to the AMP site. An LID region spans residues Gly122 to Asp159. Residues Arg123 and Thr132 to Tyr133 contribute to the ATP site. Arg156 and Arg167 together coordinate AMP. Gly203 contacts ATP.

The protein belongs to the adenylate kinase family. As to quaternary structure, monomer.

Its subcellular location is the cytoplasm. It carries out the reaction AMP + ATP = 2 ADP. It functions in the pathway purine metabolism; AMP biosynthesis via salvage pathway; AMP from ADP: step 1/1. In terms of biological role, catalyzes the reversible transfer of the terminal phosphate group between ATP and AMP. Plays an important role in cellular energy homeostasis and in adenine nucleotide metabolism. The chain is Adenylate kinase from Herminiimonas arsenicoxydans.